The sequence spans 23 residues: Prolamin alpha-3 (23 aa).

This Dactylis glomerata (Orchard grass) protein is Prolamin alpha-3.